The primary structure comprises 1041 residues: Desmoglein-4 (1041 aa).

Residues 1–23 form the signal peptide; it reads MDWLLFRNICLLILFMVVLGVNS. A propeptide spanning residues 24–49 is cleaved from the precursor; it reads EFIVEVKELDIENGTTTWQTVRRQKR. Cadherin domains lie at 50–157, 158–269, 270–385, and 389–497; these read EWIK…PPVF, TQNV…FPIL, EKTS…GPTF, and SMTF…CPVI. Over 50–634 the chain is Extracellular; it reads EWIKFAAACR…RQSNVGLGPA (585 aa). N-linked (GlcNAc...) asparagine glycosylation is present at Asn-110. A glycan (N-linked (GlcNAc...) asparagine) is linked at Asn-545. A helical transmembrane segment spans residues 635–655; it reads GIGMIILGLLLLLLSPLLLLM. The Cytoplasmic portion of the chain corresponds to 656–1041; sequence CCCKRRQPEG…RYSNMHYSRQ (386 aa). Desmoglein repeat repeat units follow at residues 884-910 and 911-941; these read TLSE…IVTE and TYTT…ETVM. The tract at residues 1014-1041 is disordered; it reads ISQTTGSTSPMTSQHRVTRYSNMHYSRQ.

In terms of assembly, interacts with JUP. As to expression, strongly expressed in the skin; during the anagen stage of hair follicles in the matrix, precortex and inner rooth sheath.

It is found in the cell membrane. Its subcellular location is the cell junction. It localises to the desmosome. Functionally, a component of desmosome cell-cell junctions which are required for positive regulation of cellular adhesion. Coordinates the transition from proliferation to differentiation in hair follicle keratinocytes. Plays a role in moderating lymphocyte migration to inflamed skin and maintaining homeostasis of the epidermal inflammatory response. The polypeptide is Desmoglein-4 (Dsg4) (Mus musculus (Mouse)).